The sequence spans 115 residues: Insulin (115 aa).

Residues methionine 1 to threonine 26 form the signal peptide. 3 cysteine pairs are disulfide-bonded: cysteine 33/cysteine 101, cysteine 45/cysteine 114, and cysteine 100/cysteine 105. Positions aspartate 60–serine 92 are cleaved as a propeptide — c peptide.

The protein belongs to the insulin family. As to quaternary structure, heterodimer of a B chain and an A chain linked by two disulfide bonds.

The protein resides in the secreted. Insulin decreases blood glucose concentration. It increases cell permeability to monosaccharides, amino acids and fatty acids. It accelerates glycolysis, the pentose phosphate cycle, and glycogen synthesis in liver. The polypeptide is Insulin (ins) (Myxine glutinosa (Atlantic hagfish)).